The primary structure comprises 160 residues: Putative 4-hydroxy-4-methyl-2-oxoglutarate aldolase (160 aa).

Substrate-binding positions include 76–79 and R98; that span reads GDMI. Residue D99 coordinates a divalent metal cation.

This sequence belongs to the class II aldolase/RraA-like family. As to quaternary structure, homotrimer. A divalent metal cation is required as a cofactor.

It carries out the reaction 4-hydroxy-4-methyl-2-oxoglutarate = 2 pyruvate. The catalysed reaction is oxaloacetate + H(+) = pyruvate + CO2. Its function is as follows. Catalyzes the aldol cleavage of 4-hydroxy-4-methyl-2-oxoglutarate (HMG) into 2 molecules of pyruvate. Also contains a secondary oxaloacetate (OAA) decarboxylase activity due to the common pyruvate enolate transition state formed following C-C bond cleavage in the retro-aldol and decarboxylation reactions. This is Putative 4-hydroxy-4-methyl-2-oxoglutarate aldolase from Alcanivorax borkumensis (strain ATCC 700651 / DSM 11573 / NCIMB 13689 / SK2).